A 614-amino-acid polypeptide reads, in one-letter code: tRNA uridine 5-carboxymethylaminomethyl modification enzyme MnmG (614 aa).

10–15 (GAGHAG) lines the FAD pocket. NAD(+) is bound at residue 271-285 (GPRYCPSIEDKIVKF).

It belongs to the MnmG family. As to quaternary structure, homodimer. Heterotetramer of two MnmE and two MnmG subunits. FAD is required as a cofactor.

The protein localises to the cytoplasm. Its function is as follows. NAD-binding protein involved in the addition of a carboxymethylaminomethyl (cmnm) group at the wobble position (U34) of certain tRNAs, forming tRNA-cmnm(5)s(2)U34. The sequence is that of tRNA uridine 5-carboxymethylaminomethyl modification enzyme MnmG from Ureaplasma parvum serovar 3 (strain ATCC 27815 / 27 / NCTC 11736).